We begin with the raw amino-acid sequence, 118 residues long: MRTKLLELVEKDQIRTDLPEIREGYNVKVHVRIKEGNKERIQVFEGLVIASYGTGINKSITVRKDSYGVGVERIFKLNSPLIAHIEVTRINKVRRAKLYYMRDLKGKSARLKEIKKAK.

The protein belongs to the bacterial ribosomal protein bL19 family.

Functionally, this protein is located at the 30S-50S ribosomal subunit interface and may play a role in the structure and function of the aminoacyl-tRNA binding site. In Metamycoplasma arthritidis (strain 158L3-1) (Mycoplasma arthritidis), this protein is Large ribosomal subunit protein bL19.